Consider the following 81-residue polypeptide: Sulfur carrier protein TusA (81 aa).

Cys19 functions as the Cysteine persulfide intermediate in the catalytic mechanism.

The protein belongs to the sulfur carrier protein TusA family. Interacts with IscS.

The protein resides in the cytoplasm. It participates in tRNA modification. Sulfur carrier protein involved in sulfur trafficking in the cell. Part of a sulfur-relay system required for 2-thiolation during synthesis of 2-thiouridine of the modified wobble base 5-methylaminomethyl-2-thiouridine (mnm(5)s(2)U) in tRNA. Interacts with IscS and stimulates its cysteine desulfurase activity. Accepts an activated sulfur from IscS, which is then transferred to TusD, and thus determines the direction of sulfur flow from IscS to 2-thiouridine formation. Also appears to be involved in sulfur transfer for the biosynthesis of molybdopterin. The protein is Sulfur carrier protein TusA of Escherichia fergusonii (strain ATCC 35469 / DSM 13698 / CCUG 18766 / IAM 14443 / JCM 21226 / LMG 7866 / NBRC 102419 / NCTC 12128 / CDC 0568-73).